Reading from the N-terminus, the 614-residue chain is Glutamine--fructose-6-phosphate aminotransferase [isomerizing] (614 aa).

Cys-2 (nucleophile; for GATase activity) is an active-site residue. The 220-residue stretch at 2–221 (CGIVGYIGKR…DGEIAVINRG (220 aa)) folds into the Glutamine amidotransferase type-2 domain. SIS domains follow at residues 291–430 (YKEK…EKGT) and 463–604 (LSKT…VDQP). Lys-609 acts as the For Fru-6P isomerization activity in catalysis.

In terms of assembly, homodimer.

Its subcellular location is the cytoplasm. It carries out the reaction D-fructose 6-phosphate + L-glutamine = D-glucosamine 6-phosphate + L-glutamate. Catalyzes the first step in hexosamine metabolism, converting fructose-6P into glucosamine-6P using glutamine as a nitrogen source. In Bacteroides thetaiotaomicron (strain ATCC 29148 / DSM 2079 / JCM 5827 / CCUG 10774 / NCTC 10582 / VPI-5482 / E50), this protein is Glutamine--fructose-6-phosphate aminotransferase [isomerizing].